The primary structure comprises 56 residues: Large ribosomal subunit protein bL33 (56 aa).

This sequence belongs to the bacterial ribosomal protein bL33 family.

The chain is Large ribosomal subunit protein bL33 from Vibrio campbellii (strain ATCC BAA-1116).